A 237-amino-acid polypeptide reads, in one-letter code: H/ACA ribonucleoprotein complex subunit 1 (237 aa).

2 stretches are compositionally biased toward gly residues: residues 1 to 59 (MGFG…GGRG) and 172 to 237 (RGGG…RGRW). Disordered stretches follow at residues 1–64 (MGFG…FDTG) and 157–237 (KPPQ…RGRW). RGG-box regions lie at residues 4 to 56 (GKPR…GRGG) and 166 to 236 (KAFT…GRGR).

Belongs to the GAR1 family. Component of the box H/ACA small nucleolar ribonucleoprotein (H/ACA snoRNP) complex consisting of Nop60B, Gar1, NPH2 and Nop10, and associated with H/ACA-type snoRNAs.

It localises to the nucleus. Its subcellular location is the nucleolus. In terms of biological role, component of the box H/ACA small nucleolar ribonucleoprotein (H/ACA snoRNP) complex, which catalyzes pseudouridylation of rRNA. This involves the isomerization of uridine such that the ribose is subsequently attached to C5, instead of the normal N1. Pseudouridine ('psi') residues may serve to stabilize the conformation of rRNAs. Required for ribosome biogenesis. H/ACA snoRNP complex-dependent ribosome biogenesis is important in female germline cell differentiation during oogenesis. The chain is H/ACA ribonucleoprotein complex subunit 1 from Drosophila melanogaster (Fruit fly).